Reading from the N-terminus, the 175-residue chain is Nucleoside diphosphate kinase 6 (175 aa).

The ATP site is built by K8, F57, R85, T91, R105, and N115. Catalysis depends on H118, which acts as the Pros-phosphohistidine intermediate.

It belongs to the NDK family. Mg(2+) is required as a cofactor.

The catalysed reaction is a 2'-deoxyribonucleoside 5'-diphosphate + ATP = a 2'-deoxyribonucleoside 5'-triphosphate + ADP. It catalyses the reaction a ribonucleoside 5'-diphosphate + ATP = a ribonucleoside 5'-triphosphate + ADP. Its function is as follows. Major role in the synthesis of nucleoside triphosphates other than ATP. The ATP gamma phosphate is transferred to the NDP beta phosphate via a ping-pong mechanism, using a phosphorylated active-site intermediate. This Rattus norvegicus (Rat) protein is Nucleoside diphosphate kinase 6 (Nme6).